Reading from the N-terminus, the 490-residue chain is Probable cytosol aminopeptidase (490 aa).

Positions 260 and 265 each coordinate Mn(2+). The active site involves Lys272. Mn(2+)-binding residues include Asp284, Asp343, and Glu345. Residue Arg347 is part of the active site.

This sequence belongs to the peptidase M17 family. The cofactor is Mn(2+).

It is found in the cytoplasm. It catalyses the reaction Release of an N-terminal amino acid, Xaa-|-Yaa-, in which Xaa is preferably Leu, but may be other amino acids including Pro although not Arg or Lys, and Yaa may be Pro. Amino acid amides and methyl esters are also readily hydrolyzed, but rates on arylamides are exceedingly low.. The enzyme catalyses Release of an N-terminal amino acid, preferentially leucine, but not glutamic or aspartic acids.. Its function is as follows. Presumably involved in the processing and regular turnover of intracellular proteins. Catalyzes the removal of unsubstituted N-terminal amino acids from various peptides. The sequence is that of Probable cytosol aminopeptidase from Gloeothece citriformis (strain PCC 7424) (Cyanothece sp. (strain PCC 7424)).